Here is a 313-residue protein sequence, read N- to C-terminus: Ribosomal protein uL3 glutamine methyltransferase (313 aa).

It belongs to the protein N5-glutamine methyltransferase family. PrmB subfamily.

It carries out the reaction L-glutaminyl-[ribosomal protein uL3] + S-adenosyl-L-methionine = N(5)-methyl-L-glutaminyl-[ribosomal protein uL3] + S-adenosyl-L-homocysteine + H(+). Functionally, methylates large ribosomal subunit protein uL3 on a specific glutamine residue. The chain is Ribosomal protein uL3 glutamine methyltransferase from Pasteurella multocida (strain Pm70).